The following is an 81-amino-acid chain: Photosystem I iron-sulfur center (81 aa).

4Fe-4S ferredoxin-type domains follow at residues serine 2–tryptophan 31 and glycine 37–tyrosine 68. [4Fe-4S] cluster is bound by residues cysteine 11, cysteine 14, cysteine 17, cysteine 21, cysteine 48, cysteine 51, cysteine 54, and cysteine 58.

The cyanobacterial PSI reaction center is composed of one copy each of PsaA,B,C,D,E,F,I,J,K,L,M and X, and forms trimeric complexes. [4Fe-4S] cluster serves as cofactor.

The protein localises to the cellular thylakoid membrane. The catalysed reaction is reduced [plastocyanin] + hnu + oxidized [2Fe-2S]-[ferredoxin] = oxidized [plastocyanin] + reduced [2Fe-2S]-[ferredoxin]. Its function is as follows. Apoprotein for the two 4Fe-4S centers FA and FB of photosystem I (PSI); essential for photochemical activity. FB is the terminal electron acceptor of PSI, donating electrons to ferredoxin. The C-terminus interacts with PsaA/B/D and helps assemble the protein into the PSI complex. Required for binding of PsaD and PsaE to PSI. PSI is a plastocyanin/cytochrome c6-ferredoxin oxidoreductase, converting photonic excitation into a charge separation, which transfers an electron from the donor P700 chlorophyll pair to the spectroscopically characterized acceptors A0, A1, FX, FA and FB in turn. Mutant proteins with a 3Fe-4S center are not observed bound to PSI in vitro, and are probably not able to do so in vivo. In Picosynechococcus sp. (strain ATCC 27264 / PCC 7002 / PR-6) (Agmenellum quadruplicatum), this protein is Photosystem I iron-sulfur center (psaC).